Reading from the N-terminus, the 438-residue chain is Proline--tRNA ligase (438 aa).

It belongs to the class-II aminoacyl-tRNA synthetase family. ProS type 2 subfamily. Homodimer.

It localises to the cytoplasm. It catalyses the reaction tRNA(Pro) + L-proline + ATP = L-prolyl-tRNA(Pro) + AMP + diphosphate. In terms of biological role, catalyzes the attachment of proline to tRNA(Pro) in a two-step reaction: proline is first activated by ATP to form Pro-AMP and then transferred to the acceptor end of tRNA(Pro). This is Proline--tRNA ligase from Rhodopseudomonas palustris (strain TIE-1).